The following is a 198-amino-acid chain: Large ribosomal subunit protein eL19 (198 aa).

2 disordered regions span residues 66 to 85 (YEEA…RGTA) and 150 to 177 (KRAK…EERQ). Positions 71 to 83 (RKGRHTGYGKRRG) are enriched in basic residues. Residues 160 to 177 (QARRDKNKESRKRREERQ) show a composition bias toward basic and acidic residues.

The protein belongs to the eukaryotic ribosomal protein eL19 family.

In Caenorhabditis elegans, this protein is Large ribosomal subunit protein eL19 (rpl-19).